Here is a 78-residue protein sequence, read N- to C-terminus: MNKAKIFMNGQSQAVRLPKEFRFSVKEVSVIPLGKGIVLQPLPNSWKDVFQEMAEISSDDIFPEGRKDLPPQKRKYFE.

One can recognise a SpoVT-AbrB domain in the interval 4–44 (AKIFMNGQSQAVRLPKEFRFSVKEVSVIPLGKGIVLQPLPN).

The protein belongs to the VapB family. Forms complexes with VapC2; probably VapC2(4):VapB2(2) in the absence of DNA, and VapC2(4):VapB2(4) in the presence of DNA. Crystallizes as heterodimers with stoichiometry VapC2(4):VapB2(4) in the presence of its probable promoter DNA. The heterodimers are in contact via alternative VapC-VapC and VapB-VapB interactions. This subunit contacts DNA.

Antitoxin component of a type II toxin-antitoxin (TA) system. Upon expression in E.coli or S.cerevisiae neutralizes the effect of cognate toxin VapC2, partially inhibits the RNase activity of VapC2. The protein is Antitoxin VapB2 (vapB2) of Rickettsia felis (strain ATCC VR-1525 / URRWXCal2) (Rickettsia azadi).